Reading from the N-terminus, the 178-residue chain is uncharacterized protein (178 aa).

This protein is non-essential for virus function. This is an uncharacterized protein from Sulfolobus spindle-shape virus 1 (SSV1).